An 85-amino-acid polypeptide reads, in one-letter code: Large ribosomal subunit protein bL27 (85 aa).

The segment covering 1-10 (MAQKKGGGST) has biased composition (gly residues). The tract at residues 1–20 (MAQKKGGGSTRNGRDSKPKM) is disordered.

Belongs to the bacterial ribosomal protein bL27 family.

In Acidovorax ebreus (strain TPSY) (Diaphorobacter sp. (strain TPSY)), this protein is Large ribosomal subunit protein bL27.